We begin with the raw amino-acid sequence, 196 residues long: tRNA (pseudouridine(54)-N(1))-methyltransferase (196 aa).

L126 lines the S-adenosyl-L-methionine pocket.

The protein belongs to the methyltransferase superfamily. TrmY family. In terms of assembly, homodimer.

Its subcellular location is the cytoplasm. It carries out the reaction pseudouridine(54) in tRNA + S-adenosyl-L-methionine = N(1)-methylpseudouridine(54) in tRNA + S-adenosyl-L-homocysteine + H(+). In terms of biological role, specifically catalyzes the N1-methylation of pseudouridine at position 54 (Psi54) in tRNAs. The chain is tRNA (pseudouridine(54)-N(1))-methyltransferase from Halobacterium salinarum (strain ATCC 700922 / JCM 11081 / NRC-1) (Halobacterium halobium).